A 161-amino-acid polypeptide reads, in one-letter code: DNA-binding protein inhibitor ID-4 (161 aa).

One can recognise a bHLH domain in the interval 52-104 (AAEAAADEPALCLQCDMNDCYSRLRRLVPTIPPNKKVSKVEILQHVIDYILDL).

In terms of assembly, heterodimer with other HLH proteins.

The protein resides in the nucleus. Transcriptional regulator (lacking a basic DNA binding domain) which negatively regulates the basic helix-loop-helix (bHLH) transcription factors by forming heterodimers and inhibiting their DNA binding and transcriptional activity. Implicated in regulating a variety of cellular processes, including cellular growth, senescence, differentiation, apoptosis, angiogenesis, and neoplastic transformation. The chain is DNA-binding protein inhibitor ID-4 (Id4) from Mus musculus (Mouse).